A 430-amino-acid polypeptide reads, in one-letter code: Probable protein phosphatase 1N (430 aa).

Residues 16–65 form a disordered region; that stretch reads CKKKEREKEGREEEEEEEAGRRAPEGPRSLLTAPRRAQRPHGGAEASGGL. The segment covering 17–26 has biased composition (basic and acidic residues); it reads KKKEREKEGR. In terms of domain architecture, PPM-type phosphatase spans 66–326; it reads RFGASAAQGW…DNMTCILVCF (261 aa). Residues aspartate 103, glycine 104, aspartate 274, and aspartate 317 each contribute to the Mn(2+) site. A disordered region spans residues 407–430; that stretch reads GEKGQDGAGKSNPTHLGSALDMEA.

Belongs to the PP2C family. The cofactor is Mg(2+). Mn(2+) is required as a cofactor.

The enzyme catalyses O-phospho-L-seryl-[protein] + H2O = L-seryl-[protein] + phosphate. It catalyses the reaction O-phospho-L-threonyl-[protein] + H2O = L-threonyl-[protein] + phosphate. The polypeptide is Probable protein phosphatase 1N (PPM1N) (Homo sapiens (Human)).